We begin with the raw amino-acid sequence, 549 residues long: Chaperonin GroEL (549 aa).

ATP contacts are provided by residues 29–32, Lys50, 86–90, Gly418, and Asp499; these read TAGP and DGTTT.

Belongs to the chaperonin (HSP60) family. As to quaternary structure, forms a cylinder of 14 subunits composed of two heptameric rings stacked back-to-back. Interacts with the co-chaperonin GroES.

The protein localises to the cytoplasm. It catalyses the reaction ATP + H2O + a folded polypeptide = ADP + phosphate + an unfolded polypeptide.. In terms of biological role, together with its co-chaperonin GroES, plays an essential role in assisting protein folding. The GroEL-GroES system forms a nano-cage that allows encapsulation of the non-native substrate proteins and provides a physical environment optimized to promote and accelerate protein folding. In Wolbachia pipientis wMel, this protein is Chaperonin GroEL.